The primary structure comprises 314 residues: Small ribosomal subunit biogenesis GTPase RsgA (314 aa).

The disordered stretch occupies residues 1–21 (MKRAPTKQPAKPAARGGERAQ). Residues 85-246 (SDQFKSKLFA…LIDSPGFQEF (162 aa)) enclose the CP-type G domain. GTP is bound by residues 134-137 (NKID) and 188-196 (GQSGMGKST). Zn(2+) contacts are provided by Cys-270, Cys-275, His-277, and Cys-283.

This sequence belongs to the TRAFAC class YlqF/YawG GTPase family. RsgA subfamily. Monomer. Associates with 30S ribosomal subunit, binds 16S rRNA. Zn(2+) serves as cofactor.

It is found in the cytoplasm. One of several proteins that assist in the late maturation steps of the functional core of the 30S ribosomal subunit. Helps release RbfA from mature subunits. May play a role in the assembly of ribosomal proteins into the subunit. Circularly permuted GTPase that catalyzes slow GTP hydrolysis, GTPase activity is stimulated by the 30S ribosomal subunit. This is Small ribosomal subunit biogenesis GTPase RsgA from Burkholderia mallei (strain ATCC 23344).